Here is a 161-residue protein sequence, read N- to C-terminus: Large ribosomal subunit protein uL15 (161 aa).

The segment at 1–50 (MKLSDIADNAGSRKKRMRIGRGIGSGKGKTGGRGGKGQTARSGVRINGFE) is disordered. The segment covering 21–37 (RGIGSGKGKTGGRGGKG) has biased composition (gly residues).

Belongs to the universal ribosomal protein uL15 family. Part of the 50S ribosomal subunit.

Its function is as follows. Binds to the 23S rRNA. The sequence is that of Large ribosomal subunit protein uL15 from Nitrobacter winogradskyi (strain ATCC 25391 / DSM 10237 / CIP 104748 / NCIMB 11846 / Nb-255).